Reading from the N-terminus, the 597-residue chain is Hydrogenase-1 large chain (597 aa).

Ni(2+) is bound by residues Cys-76, Cys-79, Cys-576, and Cys-579.

It belongs to the [NiFe]/[NiFeSe] hydrogenase large subunit family. In terms of assembly, heterodimer of a large and a small subunit. Ni(2+) serves as cofactor.

The protein resides in the cell membrane. The catalysed reaction is H2 + A = AH2. This Citrobacter freundii protein is Hydrogenase-1 large chain (hyaB).